The chain runs to 310 residues: tRNA-cytidine(32) 2-sulfurtransferase (310 aa).

The PP-loop motif motif lies at 48 to 53 (SGGKDS). [4Fe-4S] cluster-binding residues include Cys123, Cys126, and Cys214.

It belongs to the TtcA family. In terms of assembly, homodimer. The cofactor is Mg(2+). [4Fe-4S] cluster serves as cofactor.

It is found in the cytoplasm. The catalysed reaction is cytidine(32) in tRNA + S-sulfanyl-L-cysteinyl-[cysteine desulfurase] + AH2 + ATP = 2-thiocytidine(32) in tRNA + L-cysteinyl-[cysteine desulfurase] + A + AMP + diphosphate + H(+). It functions in the pathway tRNA modification. Functionally, catalyzes the ATP-dependent 2-thiolation of cytidine in position 32 of tRNA, to form 2-thiocytidine (s(2)C32). The sulfur atoms are provided by the cysteine/cysteine desulfurase (IscS) system. The polypeptide is tRNA-cytidine(32) 2-sulfurtransferase (Vibrio cholerae serotype O1 (strain ATCC 39315 / El Tor Inaba N16961)).